We begin with the raw amino-acid sequence, 195 residues long: Imidazoleglycerol-phosphate dehydratase (195 aa).

This sequence belongs to the imidazoleglycerol-phosphate dehydratase family.

The protein localises to the cytoplasm. It carries out the reaction D-erythro-1-(imidazol-4-yl)glycerol 3-phosphate = 3-(imidazol-4-yl)-2-oxopropyl phosphate + H2O. Its pathway is amino-acid biosynthesis; L-histidine biosynthesis; L-histidine from 5-phospho-alpha-D-ribose 1-diphosphate: step 6/9. The sequence is that of Imidazoleglycerol-phosphate dehydratase from Ruegeria pomeroyi (strain ATCC 700808 / DSM 15171 / DSS-3) (Silicibacter pomeroyi).